Here is a 402-residue protein sequence, read N- to C-terminus: CCA-adding enzyme (402 aa).

Residues Gly32 and Arg35 each coordinate ATP. Residues Gly32 and Arg35 each coordinate CTP. Mg(2+) contacts are provided by Asp45 and Asp47. Residues Arg116, Asp159, Arg162, Arg165, and Arg168 each coordinate ATP. Residues Arg116, Asp159, Arg162, Arg165, and Arg168 each coordinate CTP.

It belongs to the tRNA nucleotidyltransferase/poly(A) polymerase family. Bacterial CCA-adding enzyme type 3 subfamily. Homodimer. Mg(2+) serves as cofactor.

It catalyses the reaction a tRNA precursor + 2 CTP + ATP = a tRNA with a 3' CCA end + 3 diphosphate. The catalysed reaction is a tRNA with a 3' CCA end + 2 CTP + ATP = a tRNA with a 3' CCACCA end + 3 diphosphate. In terms of biological role, catalyzes the addition and repair of the essential 3'-terminal CCA sequence in tRNAs without using a nucleic acid template. Adds these three nucleotides in the order of C, C, and A to the tRNA nucleotide-73, using CTP and ATP as substrates and producing inorganic pyrophosphate. tRNA 3'-terminal CCA addition is required both for tRNA processing and repair. Also involved in tRNA surveillance by mediating tandem CCA addition to generate a CCACCA at the 3' terminus of unstable tRNAs. While stable tRNAs receive only 3'-terminal CCA, unstable tRNAs are marked with CCACCA and rapidly degraded. In Streptococcus pyogenes serotype M1, this protein is CCA-adding enzyme.